Here is a 656-residue protein sequence, read N- to C-terminus: Protein EMBRYO SAC DEVELOPMENT ARREST 30 (656 aa).

A helical; Signal-anchor for type II membrane protein membrane pass occupies residues 9 to 29 (WIALFVLILSMGSLVVHLSMT). N-linked (GlcNAc...) asparagine glycosylation occurs at N119. Residues 381 to 426 (LSELVGPETPLPENTYKMPPRKSDKQLKEEWNKAGPRPRPLPPPPD) are disordered. Over residues 401–412 (RKSDKQLKEEWN) the composition is skewed to basic and acidic residues. The span at 417–426 (RPRPLPPPPD) shows a compositional bias: pro residues. Residues N444, N522, N534, and N544 are each glycosylated (N-linked (GlcNAc...) asparagine). The disordered stretch occupies residues 631-656 (SETEEEFAKSKVASAFDQDEEWDPND). Over residues 647–656 (DQDEEWDPND) the composition is skewed to acidic residues.

It belongs to the glycosyltransferase GT106 family.

The protein localises to the membrane. It participates in glycan metabolism. In Arabidopsis thaliana (Mouse-ear cress), this protein is Protein EMBRYO SAC DEVELOPMENT ARREST 30.